A 307-amino-acid chain; its full sequence is Homoserine kinase (307 aa).

An ATP-binding site is contributed by 85–95; sequence PLTRGLGSSAA.

This sequence belongs to the GHMP kinase family. Homoserine kinase subfamily.

Its subcellular location is the cytoplasm. It carries out the reaction L-homoserine + ATP = O-phospho-L-homoserine + ADP + H(+). It participates in amino-acid biosynthesis; L-threonine biosynthesis; L-threonine from L-aspartate: step 4/5. In terms of biological role, catalyzes the ATP-dependent phosphorylation of L-homoserine to L-homoserine phosphate. The chain is Homoserine kinase from Caldicellulosiruptor bescii (strain ATCC BAA-1888 / DSM 6725 / KCTC 15123 / Z-1320) (Anaerocellum thermophilum).